A 593-amino-acid chain; its full sequence is SPI-1 type 3 secretion system translocon protein SctE (593 aa).

2 coiled-coil regions span residues 151 to 208 (DTAK…ATDA) and 287 to 314 (EGRQAEMEKKSAEFQEETRKAEETNRIM). The next 2 membrane-spanning stretches (helical) occupy residues 330-350 (VVAAVFTGGASLALAAVGLAV) and 409-429 (IVGAIVAAIAMVAVIVVVAVV).

Belongs to the SctE/SipB/YopB family. In terms of assembly, the core secretion machinery of the T3SS is composed of approximately 20 different proteins, including cytoplasmic components, a base, an export apparatus and a needle. This subunit is involved in the formation of a pore, called the translocon, in host membrane.

Its subcellular location is the secreted. The protein resides in the host membrane. It is found in the host cell. In terms of biological role, component of the type III secretion system 1 (SPI-1 T3SS), also called injectisome, which is used to inject bacterial effector proteins into eukaryotic host cells. SipB/SctE1 and SipC/SctB are inserted into the host membrane where they form a pore and allow the translocation of effector proteins into the cytosol of target cells. Its function is as follows. Induces macrophage apoptosis either by binding and activating the proapoptotic enzyme caspase-1 (caspase-1 dependent), resulting in the release of interleukin-1 beta active form, or by disrupting mitochondria and inducing autophagy (caspase-1 independent). The former is dependent of its membrane-fusion activity. This chain is SPI-1 type 3 secretion system translocon protein SctE, found in Salmonella typhi.